The sequence spans 365 residues: MNIMDFNVKKLAADAGTFLSRAVQFTEEKLGQAEKTELDAHLENLLSKAECTKIWTEKIMKQTEVLLQPNPNARIEEFVYEKLDRKAPSRINNPELLGQYMIDAGTEFGPGTAYGNALIKCGETQKRIGTADRELIQTSALNFLTPLRNFIEGDYKTIAKERKLLQNKRLDLDAAKTRLKKAKAAETRNSSEQELRITQSEFDRQAEITRLLLEGISSTHAHHLRCLNDFVEAQMTYYAQCYQYMLDLQKQLGSFPSNYLSNNNQTSVTPVPSVLPNAIGSSAMASTSGLVITSPSNLSDLKECSGSRKARVLYDYDAANSTELSLLADEVITVFSVVGMDSDWLMGERGNQKGKVPITYLELLN.

At M1 the chain carries N-acetylmethionine. Residues 1 to 30 (MNIMDFNVKKLAADAGTFLSRAVQFTEEKL) are membrane-binding amphipathic helix. The segment at 1–37 (MNIMDFNVKKLAADAGTFLSRAVQFTEEKLGQAEKTE) is required for membrane binding. A BAR domain is found at 27-261 (EEKLGQAEKT…LGSFPSNYLS (235 aa)). Phosphothreonine; by CDK5 is present on T145. Positions 155–195 (YKTIAKERKLLQNKRLDLDAAKTRLKKAKAAETRNSSEQEL) form a coiled coil. The SH3 domain maps to 305-365 (SGSRKARVLY…VPITYLELLN (61 aa)).

Belongs to the endophilin family. Homodimer, and heterodimer with SH3GLB2. Binds BAX; induction of apoptosis augments BAX binding. Binds DNM1, HTT, AMPH, BIN1 and ARFGAP1. Interacts with UVRAG; UVRAG bridges the interaction to BECN1 indicative for an association with the PI3K complex II (PI3KC3-C2). In terms of processing, phosphorylated at Thr-145 by CDK5; this phosphorylation is required for autophagy induction in starved neurons and facilitates homodimerization. Highly expressed in heart, skeletal muscle, kidney and placenta. Detected at lower levels in brain, colon, thymus, spleen, liver, small intestine, lung and peripheral blood leukocytes.

Its subcellular location is the cytoplasm. It localises to the golgi apparatus membrane. The protein localises to the mitochondrion outer membrane. It is found in the cytoplasmic vesicle. The protein resides in the autophagosome membrane. Its subcellular location is the midbody. May be required for normal outer mitochondrial membrane dynamics. Required for coatomer-mediated retrograde transport in certain cells. May recruit other proteins to membranes with high curvature. May promote membrane fusion. Involved in activation of caspase-dependent apoptosis by promoting BAX/BAK1 activation. Isoform 1 acts proapoptotic in fibroblasts. Involved in caspase-independent apoptosis during nutrition starvation and involved in the regulation of autophagy. Activates lipid kinase activity of PIK3C3 during autophagy probably by associating with the PI3K complex II (PI3KC3-C2). Associated with PI3KC3-C2 during autophagy may regulate the trafficking of ATG9A from the Golgi complex to the peripheral cytoplasm for the formation of autophagosomes by inducing Golgi membrane tubulation and fragmentation. Involved in regulation of degradative endocytic trafficking and cytokinesis, probably in the context of PI3KC3-C2. Isoform 2 acts antiapoptotic in neuronal cells; involved in maintenance of mitochondrial morphology and promotes neuronal viability. This Homo sapiens (Human) protein is Endophilin-B1 (SH3GLB1).